Consider the following 1012-residue polypeptide: AP-2 complex subunit alpha-1 (1012 aa).

HEAT repeat units lie at residues 254–289 (AMRA…VVKN), 354–391 (DIIK…VSNA), 393–430 (DIVE…DLSW), and 525–565 (PTIP…CIDV). Residues 652–678 (STDPESVARSLSHPNGTLSNIDPQTPS) are disordered. A compositionally biased stretch (polar residues) spans 663–675 (SHPNGTLSNIDPQ). The GAE domain occupies 742 to 841 (ALCLKDSGVL…LDFSYKFGAN (100 aa)).

The protein belongs to the adaptor complexes large subunit family. As to quaternary structure, adaptor protein complex 2 (AP-2) is a heterotetramer composed of two large adaptins (alpha-type and beta-type subunits), a medium adaptin (mu-type subunit) and a small adaptin (sigma-type subunit). Binds to EPSIN2.

The protein localises to the membrane. It is found in the coated pit. Its function is as follows. Subunit of the adaptor protein complex 2 (AP-2). Adaptor protein complexes function in protein transport via transport vesicles in different membrane traffic pathways. Adaptor protein complexes are vesicle coat components and appear to be involved in cargo selection and vesicle formation. AP-2 is involved in clathrin-dependent endocytosis in which cargo proteins are incorporated into vesicles surrounded by clathrin (clathrin-coated vesicles, CCVs) which are destined for fusion with the early endosome. The complex binds polyphosphoinositides. The chain is AP-2 complex subunit alpha-1 (ALPHA-ADR) from Arabidopsis thaliana (Mouse-ear cress).